The chain runs to 812 residues: Lon protease (812 aa).

The Lon N-terminal domain maps to 11–204 (IPVLPLRDVV…YLMAMMESEI (194 aa)). An ATP-binding site is contributed by 356–363 (GPPGVGKT). The Lon proteolytic domain occupies 592–773 (ENRVGQVTGL…EEEQTLSLQN (182 aa)). Catalysis depends on residues S679 and K722. The segment covering 745 to 764 (KENPDNAKADQDRHPVKNNE) has biased composition (basic and acidic residues). The interval 745-766 (KENPDNAKADQDRHPVKNNEEE) is disordered.

The protein belongs to the peptidase S16 family. Homohexamer. Organized in a ring with a central cavity. ATP binding and hydrolysis do not affect the oligomeric state of the enzyme.

The protein resides in the cytoplasm. It carries out the reaction Hydrolysis of proteins in presence of ATP.. With respect to regulation, contains an allosteric site (distinct from its active site), whose occupancy by an unfolded polypeptide leads to enzyme activation. ATP-dependent serine protease that mediates the selective degradation of mutant and abnormal proteins as well as certain short-lived regulatory proteins. Required for cellular homeostasis and for survival from DNA damage and developmental changes induced by stress. Degrades polypeptides processively to yield small peptide fragments that are 5 to 10 amino acids long. Binds to DNA in a double-stranded, site-specific manner. Endogenous substrates include the regulatory proteins RcsA and SulA, the transcriptional activator SoxS, and UmuD. Its overproduction specifically inhibits translation through at least two different pathways, one of them being the YoeB-YefM toxin-antitoxin system. The protein is Lon protease of Shigella dysenteriae serotype 1 (strain Sd197).